The primary structure comprises 433 residues: Enolase (433 aa).

Glutamine 167 is a binding site for (2R)-2-phosphoglycerate. The Proton donor role is filled by glutamate 209. Residues aspartate 246, glutamate 291, and aspartate 318 each coordinate Mg(2+). Residues lysine 343, arginine 372, serine 373, and lysine 394 each coordinate (2R)-2-phosphoglycerate. Lysine 343 serves as the catalytic Proton acceptor.

Belongs to the enolase family. In terms of assembly, component of the RNA degradosome, a multiprotein complex involved in RNA processing and mRNA degradation. Mg(2+) is required as a cofactor.

The protein localises to the cytoplasm. The protein resides in the secreted. Its subcellular location is the cell surface. The enzyme catalyses (2R)-2-phosphoglycerate = phosphoenolpyruvate + H2O. It participates in carbohydrate degradation; glycolysis; pyruvate from D-glyceraldehyde 3-phosphate: step 4/5. Functionally, catalyzes the reversible conversion of 2-phosphoglycerate (2-PG) into phosphoenolpyruvate (PEP). It is essential for the degradation of carbohydrates via glycolysis. This chain is Enolase, found in Photorhabdus laumondii subsp. laumondii (strain DSM 15139 / CIP 105565 / TT01) (Photorhabdus luminescens subsp. laumondii).